We begin with the raw amino-acid sequence, 332 residues long: MLRLGVSRTPINRQFVGYEQRRHFIVASALTLGGFVFGKRAKLADAMENGELHNKNNDDEAIRKDRMDKRLKKLSETRPIKPRYEGHVPLYPHERMLLFAISGLKSFFHPEDGNNIVKLGESSAFPFVLESLKQCMLGDETGRRILREQPNITSDTLDMDRLKKMDKNSLGYTYYTWLITEGVSPDTRAPVKYIDDPLQAFIFKRYRQCHDFYHAINGLPIIIEGEIAIKALEAANMGIPMAALGALLAPLRLKPIQKERLYDIYLPWAIRTGLSCKPLINVYWEELLEKDVNELRKELGIQPPPNLRAIRQERSKIRKELKMKYDAYEVGM.

The transit peptide at 1–24 directs the protein to the mitochondrion; the sequence is MLRLGVSRTPINRQFVGYEQRRHF. Residues His-210, Asp-211, His-214, and Glu-226 each coordinate Zn(2+).

It belongs to the COQ4 family. In terms of assembly, component of a multi-subunit COQ enzyme complex, composed of at least COQ3, COQ4, COQ5, COQ6, COQ7 and COQ9. The cofactor is Zn(2+).

It localises to the mitochondrion inner membrane. It carries out the reaction a 4-hydroxy-3-methoxy-5-(all-trans-polyprenyl)benzoate + H(+) = a 2-methoxy-6-(all-trans-polyprenyl)phenol + CO2. Its pathway is cofactor biosynthesis; ubiquinone biosynthesis. Lyase that catalyzes the C1-decarboxylation of 4-hydroxy-3-methoxy-5-(all-trans-polyprenyl)benzoic acid into 2-methoxy-6-(all-trans-polyprenyl)phenol during ubiquinone biosynthesis. The sequence is that of Ubiquinone biosynthesis protein COQ4, mitochondrial from Zygosaccharomyces rouxii (strain ATCC 2623 / CBS 732 / NBRC 1130 / NCYC 568 / NRRL Y-229).